Consider the following 363-residue polypeptide: UDP-3-O-acylglucosamine N-acyltransferase (363 aa).

The active-site Proton acceptor is histidine 259.

Belongs to the transferase hexapeptide repeat family. LpxD subfamily. Homotrimer.

It catalyses the reaction a UDP-3-O-[(3R)-3-hydroxyacyl]-alpha-D-glucosamine + a (3R)-hydroxyacyl-[ACP] = a UDP-2-N,3-O-bis[(3R)-3-hydroxyacyl]-alpha-D-glucosamine + holo-[ACP] + H(+). It functions in the pathway bacterial outer membrane biogenesis; LPS lipid A biosynthesis. Catalyzes the N-acylation of UDP-3-O-acylglucosamine using 3-hydroxyacyl-ACP as the acyl donor. Is involved in the biosynthesis of lipid A, a phosphorylated glycolipid that anchors the lipopolysaccharide to the outer membrane of the cell. This is UDP-3-O-acylglucosamine N-acyltransferase from Ruegeria pomeroyi (strain ATCC 700808 / DSM 15171 / DSS-3) (Silicibacter pomeroyi).